Consider the following 756-residue polypeptide: Hyperosmolality-gated Ca2+ permeable channel 1.5 (756 aa).

10 consecutive transmembrane segments (helical) span residues isoleucine 7–isoleucine 27, isoleucine 101–valine 121, serine 154–leucine 174, leucine 373–valine 393, phenylalanine 425–methionine 445, tyrosine 465–glutamine 485, alanine 510–leucine 530, phenylalanine 574–phenylalanine 594, valine 628–alanine 648, and serine 651–glycine 671. Positions proline 731–threonine 756 are disordered. Positions arginine 746 to threonine 756 are enriched in polar residues.

Belongs to the CSC1 (TC 1.A.17) family.

The protein localises to the membrane. Functionally, acts as an osmosensitive calcium-permeable cation channel. This is Hyperosmolality-gated Ca2+ permeable channel 1.5 from Arabidopsis thaliana (Mouse-ear cress).